The following is a 240-amino-acid chain: NADH-quinone oxidoreductase subunit C (240 aa).

The interval 1 to 82 is disordered; that stretch reads MSEEEKPKPK…PVDENRDPEP (82 aa). Positions 11-20 are enriched in low complexity; that stretch reads LSPALAAKMA. Positions 67–82 are enriched in basic and acidic residues; that stretch reads DKPKAEPVDENRDPEP.

Belongs to the complex I 30 kDa subunit family. NDH-1 is composed of 14 different subunits. Subunits NuoB, C, D, E, F, and G constitute the peripheral sector of the complex.

The protein localises to the cell inner membrane. It carries out the reaction a quinone + NADH + 5 H(+)(in) = a quinol + NAD(+) + 4 H(+)(out). Its function is as follows. NDH-1 shuttles electrons from NADH, via FMN and iron-sulfur (Fe-S) centers, to quinones in the respiratory chain. The immediate electron acceptor for the enzyme in this species is believed to be a menaquinone. Couples the redox reaction to proton translocation (for every two electrons transferred, four hydrogen ions are translocated across the cytoplasmic membrane), and thus conserves the redox energy in a proton gradient. In Chloroherpeton thalassium (strain ATCC 35110 / GB-78), this protein is NADH-quinone oxidoreductase subunit C.